The sequence spans 569 residues: Estrogen receptor (569 aa).

The modulating stretch occupies residues 1 to 151 (MYPKEEHSAG…GFDSGKETRF (151 aa)). Polar residues predominate over residues 28–37 (PTQTFGTSSP). The tract at residues 28 to 65 (PTQTFGTSSPAEPASVGYYPAPPDPHEEHLQTLGGGSS) is disordered. 2 consecutive NR C4-type zinc fingers follow at residues 152–172 (CAVC…CEGC) and 188–212 (CPAT…LRKC). The segment at residues 152-217 (CAVCSDYASG…RLRKCYEVGM (66 aa)) is a DNA-binding region (nuclear receptor). Residues 218–278 (MKGGIRKDRG…SGGVVSTLCM (61 aa)) form a hinge region. Residues 223 to 271 (RKDRGGRSVRRERRRSSNEDRDKSSSDQCSRAGVRTTGPQDKRKKRSGG) are disordered. The segment covering 237-247 (RSSNEDRDKSS) has biased composition (basic and acidic residues). The 237-residue stretch at 279 to 515 (SPDQVLLLLL…DLLLEMLDAQ (237 aa)) folds into the NR LBD domain. Positions 523-532 (VQRVWSQSEK) are enriched in polar residues. The interval 523 to 569 (VQRVWSQSEKNPPSTPTTSSSSSNNSPRGGAAAIQSNGACHSHSPDP) is disordered. A compositionally biased stretch (low complexity) spans 538 to 549 (PTTSSSSSNNSP).

This sequence belongs to the nuclear hormone receptor family. NR3 subfamily. Binds DNA as a homodimer. Can form a heterodimer with ER-beta.

It localises to the nucleus. Its function is as follows. The steroid hormones and their receptors are involved in the regulation of eukaryotic gene expression and affect cellular proliferation and differentiation in target tissues. This Danio rerio (Zebrafish) protein is Estrogen receptor (esr1).